We begin with the raw amino-acid sequence, 126 residues long: Holo-[acyl-carrier-protein] synthase (126 aa).

Residues Asp-9 and Glu-58 each coordinate Mg(2+).

Belongs to the P-Pant transferase superfamily. AcpS family. Requires Mg(2+) as cofactor.

The protein resides in the cytoplasm. The enzyme catalyses apo-[ACP] + CoA = holo-[ACP] + adenosine 3',5'-bisphosphate + H(+). Its function is as follows. Transfers the 4'-phosphopantetheine moiety from coenzyme A to a Ser of acyl-carrier-protein. This chain is Holo-[acyl-carrier-protein] synthase, found in Escherichia coli O127:H6 (strain E2348/69 / EPEC).